The sequence spans 593 residues: DNA primase (593 aa).

A CHC2-type zinc finger spans residues 38-62; it reads CPFHQEKTPSFTVSDSKRFFYCFGC. The 83-residue stretch at 250–332 folds into the Toprim domain; that stretch reads NRSILVEGYF…EKKISFIRLP (83 aa). Residues E256, D300, and D302 each contribute to the Mg(2+) site.

The protein belongs to the DnaG primase family. Monomer. Interacts with DnaB. The cofactor is Zn(2+). Mg(2+) serves as cofactor.

It catalyses the reaction ssDNA + n NTP = ssDNA/pppN(pN)n-1 hybrid + (n-1) diphosphate.. Its function is as follows. RNA polymerase that catalyzes the synthesis of short RNA molecules used as primers for DNA polymerase during DNA replication. This Rickettsia typhi (strain ATCC VR-144 / Wilmington) protein is DNA primase.